Reading from the N-terminus, the 485-residue chain is Poly(ADP-ribose) glycohydrolase 2 (485 aa).

This sequence belongs to the poly(ADP-ribose) glycohydrolase family. Expressed in head and tail neurons.

The protein localises to the cytoplasm. The enzyme catalyses [(1''-&gt;2')-ADP-alpha-D-ribose](n) + H2O = [(1''-&gt;2')-ADP-alpha-D-ribose](n-1) + ADP-D-ribose. Poly(ADP-ribose) synthesized after DNA damage is only present transiently and is rapidly degraded by poly(ADP-ribose) glycohydrolase. Poly(ADP-ribose) metabolism may be required for maintenance of the normal function of neuronal cells. In Caenorhabditis elegans, this protein is Poly(ADP-ribose) glycohydrolase 2.